Reading from the N-terminus, the 147-residue chain is Ribosome maturation factor RimP (147 aa).

Belongs to the RimP family.

It localises to the cytoplasm. Its function is as follows. Required for maturation of 30S ribosomal subunits. The protein is Ribosome maturation factor RimP of Legionella pneumophila (strain Lens).